The chain runs to 220 residues: HTH-type transcriptional repressor GlaR (220 aa).

The region spanning 1-69 (MTITSLDGYR…NQKGYRVASM (69 aa)) is the HTH gntR-type domain. The H-T-H motif DNA-binding region spans 29-48 (MSLLTSRYALGVGPLREALS).

The protein resides in the cytoplasm. With respect to regulation, the repressive effect at the glaH promoter site is specifically relieved upon glutarate binding. Functionally, negatively regulates the expression of the glaH-lhgD-gabDTP operon in a temporal manner during entry into stationary phase or during the first few hours of carbon starvation. Thereby is involved in the regulation of a L-lysine degradation pathway that proceeds via cadaverine, glutarate and L-2-hydroxyglutarate. Binds to two primary and two secondary sites in the promoter region of the glaH operon with the consensus sequences TTGTN5TTTT and ATGTN5TTTT of the primary sites, each separated by six nucleotides. The chain is HTH-type transcriptional repressor GlaR from Escherichia coli (strain K12).